Here is a 423-residue protein sequence, read N- to C-terminus: G-protein coupled receptor 83 (423 aa).

The N-terminal stretch at M1 to A17 is a signal peptide. The Extracellular segment spans residues T18–K71. N-linked (GlcNAc...) asparagine glycans are attached at residues N38 and N46. A helical transmembrane segment spans residues A72–V92. At C93–S107 the chain is on the cytoplasmic side. Residues L108–L129 form a helical membrane-spanning segment. At V130–H145 the chain is on the extracellular side. N134 carries N-linked (GlcNAc...) asparagine glycosylation. C144 and C224 are disulfide-bonded. The chain crosses the membrane as a helical span at residues V146–V167. Over D168–G186 the chain is Cytoplasmic. Residues V187–Q208 traverse the membrane as a helical segment. At K209–Y238 the chain is on the extracellular side. Residues L239–A260 form a helical membrane-spanning segment. At R261 to M293 the chain is on the cytoplasmic side. Residues L294–L315 traverse the membrane as a helical segment. Over S316–Y327 the chain is Extracellular. The chain crosses the membrane as a helical span at residues F328 to L348. Over N349–S423 the chain is Cytoplasmic. The interval S389–S423 is disordered. Positions L401–S414 are enriched in polar residues.

This sequence belongs to the G-protein coupled receptor 1 family. Predominantly expressed in the brain, with moderate expression in the hypothalamus. Expressed in the thymus.

The protein localises to the cell membrane. Functionally, G-protein coupled receptor for PEN, a neuropeptide produced from the precursor protein, proSAAS (encoded by PCSK1N). Acts through a G(i)- and G(q)-alpha-alpha-mediated pathway in response to PEN. Plays a role in food intake and body weight regulation. May contribute to the regulation of anxiety-related behaviors. This Mus musculus (Mouse) protein is G-protein coupled receptor 83.